We begin with the raw amino-acid sequence, 173 residues long: Small ribosomal subunit protein uS5 (173 aa).

One can recognise an S5 DRBM domain in the interval L16–V79.

Belongs to the universal ribosomal protein uS5 family. Part of the 30S ribosomal subunit. Contacts proteins S4 and S8.

With S4 and S12 plays an important role in translational accuracy. Its function is as follows. Located at the back of the 30S subunit body where it stabilizes the conformation of the head with respect to the body. In Anaplasma phagocytophilum (strain HZ), this protein is Small ribosomal subunit protein uS5.